The following is a 506-amino-acid chain: GMP synthase [glutamine-hydrolyzing] (506 aa).

In terms of domain architecture, Glutamine amidotransferase type-1 spans 3–188; sequence GFVILDFGSQ…AQGMCKAPAD (186 aa). C80 acts as the Nucleophile in catalysis. Catalysis depends on residues H162 and E164. In terms of domain architecture, GMPS ATP-PPase spans 189–381; it reads WDAPHIKDIL…LGLPKEMLWR (193 aa). 217–223 lines the ATP pocket; that stretch reads SGGVDST.

Homodimer.

The enzyme catalyses XMP + L-glutamine + ATP + H2O = GMP + L-glutamate + AMP + diphosphate + 2 H(+). The protein operates within purine metabolism; GMP biosynthesis; GMP from XMP (L-Gln route): step 1/1. In terms of biological role, catalyzes the synthesis of GMP from XMP. The sequence is that of GMP synthase [glutamine-hydrolyzing] from Bdellovibrio bacteriovorus (strain ATCC 15356 / DSM 50701 / NCIMB 9529 / HD100).